The chain runs to 397 residues: Acetate kinase (397 aa).

Residue asparagine 8 coordinates Mg(2+). Residue lysine 15 participates in ATP binding. Position 89 (arginine 89) interacts with substrate. The active-site Proton donor/acceptor is the aspartate 146. Residues 206-210 (HLGNG), 281-283 (DLR), and 329-333 (GVGEN) each bind ATP. Glutamate 382 provides a ligand contact to Mg(2+).

The protein belongs to the acetokinase family. In terms of assembly, homodimer. Mg(2+) is required as a cofactor. Mn(2+) serves as cofactor.

The protein resides in the cytoplasm. The catalysed reaction is acetate + ATP = acetyl phosphate + ADP. Its pathway is metabolic intermediate biosynthesis; acetyl-CoA biosynthesis; acetyl-CoA from acetate: step 1/2. In terms of biological role, catalyzes the formation of acetyl phosphate from acetate and ATP. Can also catalyze the reverse reaction. The protein is Acetate kinase of Bacillus cereus (strain ATCC 10987 / NRS 248).